The sequence spans 142 residues: Neuritin (142 aa).

A signal peptide spans 1–27 (MGLKLNGRYISLILAVQIAYLVQAVRA). Gly116 is lipidated: GPI-anchor amidated glycine. Positions 117–142 (AAGSLLPALSVLLVSLSAALATWFSF) are cleaved as a propeptide — removed in mature form.

The protein belongs to the neuritin family. In terms of assembly, component of the outer core of AMPAR complex. AMPAR complex consists of an inner core made of 4 pore-forming GluA/GRIA proteins (GRIA1, GRIA2, GRIA3 and GRIA4) and 4 major auxiliary subunits arranged in a twofold symmetry. One of the two pairs of distinct binding sites is occupied either by CNIH2, CNIH3 or CACNG2, CACNG3. The other harbors CACNG2, CACNG3, CACNG4, CACNG8 or GSG1L. This inner core of AMPAR complex is complemented by outer core constituents binding directly to the GluA/GRIA proteins at sites distinct from the interaction sites of the inner core constituents. Outer core constituents include at least PRRT1, PRRT2, CKAMP44/SHISA9, FRRS1L and NRN1. The proteins of the inner and outer core serve as a platform for other, more peripherally associated AMPAR constituents. Alone or in combination, these auxiliary subunits control the gating and pharmacology of the AMPAR complex and profoundly impact their biogenesis and protein processing. Expressed in the brain (at protein level).

Its subcellular location is the cell membrane. It is found in the synapse. Promotes neurite outgrowth and especially branching of neuritic processes in primary hippocampal and cortical cells. The sequence is that of Neuritin (Nrn1) from Mus musculus (Mouse).